Here is a 538-residue protein sequence, read N- to C-terminus: MAAKLVSLDMQARTALIRGLDIVADTVKITLGPKGRNVVLEKKFGAPVITNDGVTIAKEIDLEDPFENMGAQLVKEVASKTNDVAGDGTTTATVLAQALVHEGMKHVVAGANPMYVRRGIEKAVEKVVEELKKIAKPVETKQDIAHVAAISANNDTEIGNLIAEAMDKVGKDGVITVEESQGITTTLELVEGMQFDRGYLSAYMITDPERMEAVLEEPYILITDRKISAVSEILPILERVVQTGKPLVIIAEDVEGEALATLVVNKLRGVLQSLAVKAPGFGDRRKAMLQDIAILTGGQFISEETGIKLENVTLDMLGRAEKVRANKDKTTIIGGKGNKKDIEARIAQIKKQLEETDSEFDREKLQERLAKLAGGVAVIKVGAATEVELKEKKHRIEDALSATKAAVEEGIVPGGGVALLRTIKALDDVKVDNEDERIGVEIVRRSLDVPLKLIANNAGKEGSIIAEKVKEMDGPMGYDAANDRFVNMFEAGIVDPAKVTRSALQNAASIAALVLTTEGLVAEKPEKEKQTPPPPPEY.

Residues 30-33 (TLGP), 87-91 (DGTTT), Gly415, 479-481 (DAA), and Asp495 each bind ATP.

Belongs to the chaperonin (HSP60) family. Forms a cylinder of 14 subunits composed of two heptameric rings stacked back-to-back. Interacts with the co-chaperonin GroES.

Its subcellular location is the cytoplasm. The catalysed reaction is ATP + H2O + a folded polypeptide = ADP + phosphate + an unfolded polypeptide.. Together with its co-chaperonin GroES, plays an essential role in assisting protein folding. The GroEL-GroES system forms a nano-cage that allows encapsulation of the non-native substrate proteins and provides a physical environment optimized to promote and accelerate protein folding. This is Chaperonin GroEL from Dictyoglomus thermophilum (strain ATCC 35947 / DSM 3960 / H-6-12).